A 116-amino-acid chain; its full sequence is Large ribosomal subunit protein bL17 (116 aa).

This sequence belongs to the bacterial ribosomal protein bL17 family. As to quaternary structure, part of the 50S ribosomal subunit. Contacts protein L32.

In Crocosphaera subtropica (strain ATCC 51142 / BH68) (Cyanothece sp. (strain ATCC 51142)), this protein is Large ribosomal subunit protein bL17.